The primary structure comprises 132 residues: Holo-[acyl-carrier-protein] synthase (132 aa).

2 residues coordinate Mg(2+): aspartate 13 and glutamate 63.

Belongs to the P-Pant transferase superfamily. AcpS family. The cofactor is Mg(2+).

It localises to the cytoplasm. It catalyses the reaction apo-[ACP] + CoA = holo-[ACP] + adenosine 3',5'-bisphosphate + H(+). Transfers the 4'-phosphopantetheine moiety from coenzyme A to a Ser of acyl-carrier-protein. This is Holo-[acyl-carrier-protein] synthase from Gloeobacter violaceus (strain ATCC 29082 / PCC 7421).